The following is a 147-amino-acid chain: Large ribosomal subunit protein uL15 (147 aa).

Over residues 1 to 20 (MTLRLNDLKPADGARTERTR) the composition is skewed to basic and acidic residues. The interval 1–61 (MTLRLNDLKP…GFEGGQTPMQ (61 aa)) is disordered. Gly residues predominate over residues 23–33 (RGIGSGLGKTA). A compositionally biased stretch (basic residues) spans 34–47 (GRGHKGSFARKGGG).

This sequence belongs to the universal ribosomal protein uL15 family. In terms of assembly, part of the 50S ribosomal subunit.

Binds to the 23S rRNA. The polypeptide is Large ribosomal subunit protein uL15 (Xanthomonas axonopodis pv. citri (strain 306)).